The following is a 442-amino-acid chain: Xaa-Pro dipeptidase (442 aa).

The Mn(2+) site is built by Asp245, Asp256, His338, Glu383, and Glu422.

This sequence belongs to the peptidase M24B family. Bacterial-type prolidase subfamily. Mn(2+) serves as cofactor.

It carries out the reaction Xaa-L-Pro dipeptide + H2O = an L-alpha-amino acid + L-proline. In terms of biological role, splits dipeptides with a prolyl residue in the C-terminal position. This chain is Xaa-Pro dipeptidase, found in Sodalis glossinidius (strain morsitans).